The primary structure comprises 592 residues: Aspartate--tRNA ligase (592 aa).

Position 173 (Glu-173) interacts with L-aspartate. Residues 197–200 form an aspartate region; sequence QLFK. Arg-219 is an L-aspartate binding site. Residues 219–221 and Gln-228 each bind ATP; that span reads RDE. His-448 contributes to the L-aspartate binding site. An ATP-binding site is contributed by Glu-482. Residue Arg-489 participates in L-aspartate binding. 534–537 contributes to the ATP binding site; the sequence is GLDR.

The protein belongs to the class-II aminoacyl-tRNA synthetase family. Type 1 subfamily. Homodimer.

The protein resides in the cytoplasm. It carries out the reaction tRNA(Asp) + L-aspartate + ATP = L-aspartyl-tRNA(Asp) + AMP + diphosphate. Its function is as follows. Catalyzes the attachment of L-aspartate to tRNA(Asp) in a two-step reaction: L-aspartate is first activated by ATP to form Asp-AMP and then transferred to the acceptor end of tRNA(Asp). This is Aspartate--tRNA ligase from Shewanella putrefaciens (strain CN-32 / ATCC BAA-453).